The sequence spans 214 residues: METYEQEYRLLRADIEEKLNDLSKSGENSVIQSCQRLLNEIDEVIGQMEIEITGIPTSERGLVNGRIRSYRSTLEEWRRHLKEEIGKSDRKALFGNRDETSGDYIASDQDYDQRTRLLQGTNRLEQSSQRLLESQRIANETEGIGASILRDLHGQRNQLEHSLEMLGDTSGHLDRSLRTLKTMARRLAMNRFFTTAIIAILVILILLVLYSKFR.

Residues M1–R191 are Cytoplasmic-facing. The helical; Anchor for type IV membrane protein transmembrane segment at F192–K212 threads the bilayer. The Vesicular segment spans residues F213 to R214.

The protein belongs to the VTI1 family.

It localises to the membrane. In terms of biological role, V-SNARE that mediates vesicle transport pathways through interactions with t-SNAREs on the target membrane. These interactions are proposed to mediate aspects of the specificity of vesicle trafficking and to promote fusion of the lipid bilayers. This Schizosaccharomyces pombe (strain 972 / ATCC 24843) (Fission yeast) protein is Vesicle transport v-SNARE protein vti1 (vti1).